The chain runs to 62 residues: Small ribosomal subunit protein uS14 (62 aa).

Residues cysteine 25, cysteine 28, cysteine 41, and cysteine 44 each contribute to the Zn(2+) site.

This sequence belongs to the universal ribosomal protein uS14 family. Zinc-binding uS14 subfamily. As to quaternary structure, part of the 30S ribosomal subunit. Contacts proteins S3 and S10. Requires Zn(2+) as cofactor.

Functionally, binds 16S rRNA, required for the assembly of 30S particles and may also be responsible for determining the conformation of the 16S rRNA at the A site. In Hydrogenobaculum sp. (strain Y04AAS1), this protein is Small ribosomal subunit protein uS14.